A 171-amino-acid chain; its full sequence is Large ribosomal subunit protein uL10 (171 aa).

Belongs to the universal ribosomal protein uL10 family. As to quaternary structure, part of the ribosomal stalk of the 50S ribosomal subunit. The N-terminus interacts with L11 and the large rRNA to form the base of the stalk. The C-terminus forms an elongated spine to which L12 dimers bind in a sequential fashion forming a multimeric L10(L12)X complex.

Functionally, forms part of the ribosomal stalk, playing a central role in the interaction of the ribosome with GTP-bound translation factors. The polypeptide is Large ribosomal subunit protein uL10 (Hyphomonas neptunium (strain ATCC 15444)).